The following is a 461-amino-acid chain: 3-isopropylmalate dehydratase large subunit (461 aa).

Cys-338, Cys-398, and Cys-401 together coordinate [4Fe-4S] cluster.

Belongs to the aconitase/IPM isomerase family. LeuC type 1 subfamily. Heterodimer of LeuC and LeuD. [4Fe-4S] cluster is required as a cofactor.

The enzyme catalyses (2R,3S)-3-isopropylmalate = (2S)-2-isopropylmalate. It participates in amino-acid biosynthesis; L-leucine biosynthesis; L-leucine from 3-methyl-2-oxobutanoate: step 2/4. In terms of biological role, catalyzes the isomerization between 2-isopropylmalate and 3-isopropylmalate, via the formation of 2-isopropylmaleate. The polypeptide is 3-isopropylmalate dehydratase large subunit (Streptococcus mutans serotype c (strain ATCC 700610 / UA159)).